The following is a 234-amino-acid chain: Leucyl/phenylalanyl-tRNA--protein transferase (234 aa).

This sequence belongs to the L/F-transferase family.

Its subcellular location is the cytoplasm. It carries out the reaction N-terminal L-lysyl-[protein] + L-leucyl-tRNA(Leu) = N-terminal L-leucyl-L-lysyl-[protein] + tRNA(Leu) + H(+). It catalyses the reaction N-terminal L-arginyl-[protein] + L-leucyl-tRNA(Leu) = N-terminal L-leucyl-L-arginyl-[protein] + tRNA(Leu) + H(+). The enzyme catalyses L-phenylalanyl-tRNA(Phe) + an N-terminal L-alpha-aminoacyl-[protein] = an N-terminal L-phenylalanyl-L-alpha-aminoacyl-[protein] + tRNA(Phe). Its function is as follows. Functions in the N-end rule pathway of protein degradation where it conjugates Leu, Phe and, less efficiently, Met from aminoacyl-tRNAs to the N-termini of proteins containing an N-terminal arginine or lysine. This is Leucyl/phenylalanyl-tRNA--protein transferase from Citrobacter koseri (strain ATCC BAA-895 / CDC 4225-83 / SGSC4696).